The primary structure comprises 353 residues: Melatonin receptor type 1A (353 aa).

The segment at 1–26 is disordered; it reads MRANGSELNGTVLPRDPPAEGSPRRP. Topologically, residues 1-32 are extracellular; sequence MRANGSELNGTVLPRDPPAEGSPRRPPWVTST. Residues Asn-4 and Asn-9 are each glycosylated (N-linked (GlcNAc...) asparagine). A helical membrane pass occupies residues 33 to 53; the sequence is LATILIFTIVVDLLGNLLVIL. Residues 54–66 lie on the Cytoplasmic side of the membrane; that stretch reads SVYRNKKLRNAGN. Residues 67–87 form a helical membrane-spanning segment; sequence IFVVSLAIADLVVAIYPYPLV. At 88 to 105 the chain is on the extracellular side; it reads LTSVFHNGWNLGYLHCQI. Cys-103 and Cys-180 are joined by a disulfide. The helical transmembrane segment at 106-126 threads the bilayer; it reads SGFLMGLSVIGSIFNITGIAI. Residues 127–145 lie on the Cytoplasmic side of the membrane; sequence NRYCYICHSLKYDKLYSDK. Residues 146–166 traverse the membrane as a helical segment; that stretch reads NSLCYVGLIWVLTVVAIVPNL. Residues 167–190 lie on the Extracellular side of the membrane; it reads FVGSLQYDPRIYSCTFAQSVSSAY. Residues 191–211 traverse the membrane as a helical segment; the sequence is TIAVVFFHFILPIAIVTYCYL. At 212–243 the chain is on the cytoplasmic side; the sequence is RIWILVIQVRRRVKPDNNPRLKPHDFRNFVTM. The chain crosses the membrane as a helical span at residues 244–264; the sequence is FVVFVLFAVCWAPLNFIGLAV. The Extracellular segment spans residues 265-277; that stretch reads AVDPETIIPRIPE. The helical transmembrane segment at 278-298 threads the bilayer; the sequence is WLFVSSYYMAYFNSCLNAIIY. Residues 299–353 are Cytoplasmic-facing; the sequence is GLLNQNFRREYKKIVVSFCTAKAFFQDSSNDAADRIRSKPSPLITNNNQVKVDSV.

It belongs to the G-protein coupled receptor 1 family. As to expression, expressed in optic tectum and retina, less in neostriatum, hypothalamus and thalamus.

The protein localises to the cell membrane. In terms of biological role, high affinity receptor for melatonin. The activity of this receptor is mediated by pertussis toxin sensitive G proteins that inhibits adenylate cyclase activity. This Gallus gallus (Chicken) protein is Melatonin receptor type 1A.